The chain runs to 230 residues: Iron-dependent repressor IdeR (230 aa).

The region spanning 4–65 (LVDTTEMYLR…VAGDRHLELT (62 aa)) is the HTH dtxR-type domain.

Belongs to the DtxR/MntR family. As to quaternary structure, homodimer.

The protein localises to the cytoplasm. Metal-dependent DNA-binding protein that controls transcription of many genes involved in iron metabolism. This chain is Iron-dependent repressor IdeR (ideR), found in Mycobacterium bovis (strain ATCC BAA-935 / AF2122/97).